A 233-amino-acid polypeptide reads, in one-letter code: RNA/RNP complex-1-interacting phosphatase homolog (233 aa).

A compositionally biased stretch (basic residues) spans 1–14 (MSNYHHNHNYQHRP). The segment at 1–21 (MSNYHHNHNYQHRPRGYERLP) is disordered. A Tyrosine-protein phosphatase domain is found at 34–206 (NVGRDIDGTR…LYEAERKKKY (173 aa)). Cys150 (phosphocysteine intermediate) is an active-site residue. 151-156 (THGLNR) provides a ligand contact to substrate. Residue Arg156 is the Proton donor/acceptor of the active site. Residues 204–233 (KKYGKSSGKSSGNSADSTISSEQLHRNNSQ) form a disordered region. Low complexity predominate over residues 208-217 (KSSGKSSGNS). Over residues 218 to 233 (ADSTISSEQLHRNNSQ) the composition is skewed to polar residues.

The protein belongs to the protein-tyrosine phosphatase family. Non-receptor class dual specificity subfamily. As to quaternary structure, interacts with the ERI/DICER complex component dcr-1. Interacts with ERI/DICER complex components rrf-3 and isoform b of eri-1. Interacts with drh-3 and rde-8.

It localises to the cytoplasm. The protein localises to the nucleus. In terms of biological role, RNA polyphosphatase which has RNA 5'-triphosphatase and diphosphatase activities. Displays poor protein-tyrosine phosphatase activity. Binds to 5'-triphosphorylated RNAs (also called ppp-RNAs). Dephosphorylates ppp-RNAs converting them to 5'-monophosphorylated RNAs (also called p-RNAs). During small-RNA-mediated gene-silencing or RNA interference (RNAi), involved in the dcr-1-mediated processing of an amplified dsRNA intermediate. This is most likely in association with several components of the ERI/DICER complex including dcr-1, eri-1 and rrf-3. Plays a role in the biogenesis of 26G small interfering RNAs (26G-siRNAs), which are a class of 26 nucleotide siRNAs that possess a guanine residue at the 5'-end, by dephosphorylating 5'-triphosphorylated 26G-siRNAs prior to their maturation by the ERI/DICER complex. Plays a role in the biogenesis of csr-1-bound 22G small interfering RNAs (22G-siRNAs), which are a class of 22 nucleotide siRNAs that possess a guanine residue at the 5'-end. Not required for the biogenesis of microRNAs (miRNA) or for the biogenesis of a class of 21 nucleotide PIWI-interacting RNAs (piRNAs) that possess a uracil residue at the 5'-end (also called 21U-RNAs). This Caenorhabditis elegans protein is RNA/RNP complex-1-interacting phosphatase homolog.